The sequence spans 305 residues: Ribosomal protein L11 methyltransferase (305 aa).

Residues Thr149, Gly176, Asp198, and Asn240 each coordinate S-adenosyl-L-methionine.

The protein belongs to the methyltransferase superfamily. PrmA family.

It is found in the cytoplasm. It carries out the reaction L-lysyl-[protein] + 3 S-adenosyl-L-methionine = N(6),N(6),N(6)-trimethyl-L-lysyl-[protein] + 3 S-adenosyl-L-homocysteine + 3 H(+). Functionally, methylates ribosomal protein L11. In Trichlorobacter lovleyi (strain ATCC BAA-1151 / DSM 17278 / SZ) (Geobacter lovleyi), this protein is Ribosomal protein L11 methyltransferase.